A 414-amino-acid polypeptide reads, in one-letter code: Na(+)/H(+) antiporter NhaA (414 aa).

The next 11 membrane-spanning stretches (helical) occupy residues 22–42, 61–81, 101–121, 131–151, 171–191, 215–235, 239–259, 281–301, 308–328, 343–363, and 379–399; these read VGGF…NSPF, LHLT…FFVV, MLPI…YAAF, GWGI…AVVG, LGAI…LPLI, SAAL…WALV, GVHA…VPLA, VLPV…LGAV, LGII…GSWV, WIDI…SLLI, and KAGV…VLAV.

It belongs to the NhaA Na(+)/H(+) (TC 2.A.33) antiporter family.

The protein resides in the cell membrane. It carries out the reaction Na(+)(in) + 2 H(+)(out) = Na(+)(out) + 2 H(+)(in). Na(+)/H(+) antiporter that extrudes sodium in exchange for external protons. The chain is Na(+)/H(+) antiporter NhaA from Thermobifida fusca (strain YX).